Here is a 179-residue protein sequence, read N- to C-terminus: MSRVGKKLLEIPSDVTVTLNDNNTVAVKGPKGELTRTFHPDMEIKVEDNVLTVARPSDQKEHRALHGTTRSLLGNMVEGVSKGFERGLELVGVGYRASKSGNKLVLNVGYSHPVEIVPEEGIEIEVPSQTKVVVKGTDKERVGAIAANIRAVRSPEPYKGKGIRYEGEVVRRKEGKSAK.

It belongs to the universal ribosomal protein uL6 family. Part of the 50S ribosomal subunit.

Its function is as follows. This protein binds to the 23S rRNA, and is important in its secondary structure. It is located near the subunit interface in the base of the L7/L12 stalk, and near the tRNA binding site of the peptidyltransferase center. In Bacillus subtilis (strain 168), this protein is Large ribosomal subunit protein uL6.